The sequence spans 208 residues: Protein-L-isoaspartate O-methyltransferase (208 aa).

Serine 59 is a catalytic residue.

It belongs to the methyltransferase superfamily. L-isoaspartyl/D-aspartyl protein methyltransferase family.

The protein localises to the cytoplasm. It carries out the reaction [protein]-L-isoaspartate + S-adenosyl-L-methionine = [protein]-L-isoaspartate alpha-methyl ester + S-adenosyl-L-homocysteine. In terms of biological role, catalyzes the methyl esterification of L-isoaspartyl residues in peptides and proteins that result from spontaneous decomposition of normal L-aspartyl and L-asparaginyl residues. It plays a role in the repair and/or degradation of damaged proteins. The polypeptide is Protein-L-isoaspartate O-methyltransferase (Citrobacter koseri (strain ATCC BAA-895 / CDC 4225-83 / SGSC4696)).